Consider the following 540-residue polypeptide: Chaperonin GroEL (540 aa).

ATP is bound by residues 30-33, Lys51, 87-91, Gly415, 479-481, and Asp495; these read TLGP, DGTTT, and NAA.

The protein belongs to the chaperonin (HSP60) family. As to quaternary structure, forms a cylinder of 14 subunits composed of two heptameric rings stacked back-to-back. Interacts with the co-chaperonin GroES.

It is found in the cytoplasm. It carries out the reaction ATP + H2O + a folded polypeptide = ADP + phosphate + an unfolded polypeptide.. Together with its co-chaperonin GroES, plays an essential role in assisting protein folding. The GroEL-GroES system forms a nano-cage that allows encapsulation of the non-native substrate proteins and provides a physical environment optimized to promote and accelerate protein folding. The chain is Chaperonin GroEL from Raoultella planticola (Klebsiella planticola).